A 160-amino-acid polypeptide reads, in one-letter code: MGVTKKPDLSDPVLRAKLAKGMGHNYYGEPAWPNDLLYIFPVVILGTIACTVGLAVLEPSMIGEPANPFATPLEILPEWYFFPVFQILRTVPNKLLGVLLMAAVPAGLLTVPFLENVNKFQNPFRRPVATTIFLIGTAVAIWLGIGAALPIDKSLTLGLS.

The next 3 membrane-spanning stretches (helical) occupy residues 36-56, 95-115, and 131-151; these read LLYIFPVVILGTIACTVGLAV, LLGVLLMAAVPAGLLTVPFLE, and TIFLIGTAVAIWLGIGAALPI.

Belongs to the cytochrome b family. PetD subfamily. As to quaternary structure, the 4 large subunits of the cytochrome b6-f complex are cytochrome b6, subunit IV (17 kDa polypeptide, petD), cytochrome f and the Rieske protein, while the 4 small subunits are petG, petL, petM and petN. The complex functions as a dimer.

Its subcellular location is the plastid. It is found in the chloroplast thylakoid membrane. In terms of biological role, component of the cytochrome b6-f complex, which mediates electron transfer between photosystem II (PSII) and photosystem I (PSI), cyclic electron flow around PSI, and state transitions. The protein is Cytochrome b6-f complex subunit 4 of Anthoceros angustus (Hornwort).